The chain runs to 120 residues: Glycine cleavage system H protein (120 aa).

Residues 19–101 (DGTVGITDHA…YEGGWLFKLE (83 aa)) form the Lipoyl-binding domain. The residue at position 60 (K60) is an N6-lipoyllysine.

The protein belongs to the GcvH family. In terms of assembly, the glycine cleavage system is composed of four proteins: P, T, L and H. Requires (R)-lipoate as cofactor.

Functionally, the glycine cleavage system catalyzes the degradation of glycine. The H protein shuttles the methylamine group of glycine from the P protein to the T protein. This chain is Glycine cleavage system H protein, found in Deinococcus deserti (strain DSM 17065 / CIP 109153 / LMG 22923 / VCD115).